Consider the following 560-residue polypeptide: Dihydroxy-acid dehydratase (560 aa).

Cysteine 50 serves as a coordination point for [2Fe-2S] cluster. Aspartate 82 lines the Mg(2+) pocket. A [2Fe-2S] cluster-binding site is contributed by cysteine 123. Residues aspartate 124 and lysine 125 each contribute to the Mg(2+) site. The residue at position 125 (lysine 125) is an N6-carboxylysine. Position 195 (cysteine 195) interacts with [2Fe-2S] cluster. Glutamate 446 provides a ligand contact to Mg(2+). The active-site Proton acceptor is the serine 472.

Belongs to the IlvD/Edd family. In terms of assembly, homodimer. [2Fe-2S] cluster serves as cofactor. The cofactor is Mg(2+).

It carries out the reaction (2R)-2,3-dihydroxy-3-methylbutanoate = 3-methyl-2-oxobutanoate + H2O. The catalysed reaction is (2R,3R)-2,3-dihydroxy-3-methylpentanoate = (S)-3-methyl-2-oxopentanoate + H2O. The protein operates within amino-acid biosynthesis; L-isoleucine biosynthesis; L-isoleucine from 2-oxobutanoate: step 3/4. Its pathway is amino-acid biosynthesis; L-valine biosynthesis; L-valine from pyruvate: step 3/4. In terms of biological role, functions in the biosynthesis of branched-chain amino acids. Catalyzes the dehydration of (2R,3R)-2,3-dihydroxy-3-methylpentanoate (2,3-dihydroxy-3-methylvalerate) into 2-oxo-3-methylpentanoate (2-oxo-3-methylvalerate) and of (2R)-2,3-dihydroxy-3-methylbutanoate (2,3-dihydroxyisovalerate) into 2-oxo-3-methylbutanoate (2-oxoisovalerate), the penultimate precursor to L-isoleucine and L-valine, respectively. This Leptothrix cholodnii (strain ATCC 51168 / LMG 8142 / SP-6) (Leptothrix discophora (strain SP-6)) protein is Dihydroxy-acid dehydratase.